The following is a 207-amino-acid chain: Ribonuclease HII (207 aa).

One can recognise an RNase H type-2 domain in the interval Asp12 to Gly201. Residues Asp18, Glu19, and Asp110 each contribute to the a divalent metal cation site.

This sequence belongs to the RNase HII family. Requires Mn(2+) as cofactor. It depends on Mg(2+) as a cofactor.

Its subcellular location is the cytoplasm. The catalysed reaction is Endonucleolytic cleavage to 5'-phosphomonoester.. Its function is as follows. Endonuclease that specifically degrades the RNA of RNA-DNA hybrids. The sequence is that of Ribonuclease HII from Pseudomonas putida (strain GB-1).